The sequence spans 170 residues: Lipoprotein signal peptidase (170 aa).

3 helical membrane passes run 12–32, 67–87, and 93–113; these read WYWV…WVLA, WQRW…TVWL, and SLLK…GNLV. Active-site residues include aspartate 123 and aspartate 141. A helical membrane pass occupies residues 137–157; it reads FNIADSAIFIGAVLIIWDSFF.

This sequence belongs to the peptidase A8 family.

The protein localises to the cell inner membrane. The catalysed reaction is Release of signal peptides from bacterial membrane prolipoproteins. Hydrolyzes -Xaa-Yaa-Zaa-|-(S,diacylglyceryl)Cys-, in which Xaa is hydrophobic (preferably Leu), and Yaa (Ala or Ser) and Zaa (Gly or Ala) have small, neutral side chains.. It functions in the pathway protein modification; lipoprotein biosynthesis (signal peptide cleavage). This protein specifically catalyzes the removal of signal peptides from prolipoproteins. This chain is Lipoprotein signal peptidase, found in Shewanella oneidensis (strain ATCC 700550 / JCM 31522 / CIP 106686 / LMG 19005 / NCIMB 14063 / MR-1).